The following is a 403-amino-acid chain: Phosphoglycerate kinase (403 aa).

Residues 24–26 (DLN), Arg39, 62–65 (HLGR), Arg121, and Arg161 contribute to the substrate site. ATP-binding positions include Lys211, Gly299, Glu330, and 359 to 362 (GGDS).

Belongs to the phosphoglycerate kinase family. In terms of assembly, monomer.

The protein localises to the cytoplasm. The catalysed reaction is (2R)-3-phosphoglycerate + ATP = (2R)-3-phospho-glyceroyl phosphate + ADP. The protein operates within carbohydrate degradation; glycolysis; pyruvate from D-glyceraldehyde 3-phosphate: step 2/5. The sequence is that of Phosphoglycerate kinase from Rhodococcus jostii (strain RHA1).